Here is a 290-residue protein sequence, read N- to C-terminus: 33 kDa chaperonin (290 aa).

Disulfide bonds link C235/C237 and C268/C271.

Belongs to the HSP33 family. Post-translationally, under oxidizing conditions two disulfide bonds are formed involving the reactive cysteines. Under reducing conditions zinc is bound to the reactive cysteines and the protein is inactive.

The protein resides in the cytoplasm. Its function is as follows. Redox regulated molecular chaperone. Protects both thermally unfolding and oxidatively damaged proteins from irreversible aggregation. Plays an important role in the bacterial defense system toward oxidative stress. This chain is 33 kDa chaperonin, found in Streptococcus equi subsp. zooepidemicus (strain H70).